The following is a 264-amino-acid chain: Apolipoprotein A-I (264 aa).

An N-terminal signal peptide occupies residues 1-18 (MKAVLLVVAALFLAGSQA). 2 tandem repeats follow at residues 67–88 (LRLS…ADFG) and 89–110 (LATQ…QIVS). Positions 67–264 (LRLSDNWDTL…DQASKQLAAQ (198 aa)) are 10 X approximate tandem repeats. One copy of the 3; half-length repeat lies at 111-121 (EDLQDVKHKVQ). A run of 5 repeats spans residues 122–143 (PYLE…EKVR), 144–165 (PLGI…EKLT), 166–187 (PLGE…TQLA), 188–207 (PFSE…LKDS), and 208–229 (ATLA…EKAK). Residue Met-193 is modified to Methionine sulfoxide. One copy of the 9; half-length repeat lies at 230–240 (PALEDLRQGLL). The stretch at 241–264 (PVLENLKASILSSIDQASKQLAAQ) is repeat 10.

It belongs to the apolipoprotein A1/A4/E family. In terms of assembly, homodimer. Interacts with APOA1BP and CLU. Component of a sperm activating protein complex (SPAP), consisting of APOA1, an immunoglobulin heavy chain, an immunoglobulin light chain and albumin. Interacts with NDRG1. Interacts with SCGB3A2. Interacts with NAXE and YJEFN3. Glycosylated. Post-translationally, palmitoylated. In terms of processing, phosphorylation sites are present in the extracellular medium.

It is found in the secreted. Functionally, participates in the reverse transport of cholesterol from tissues to the liver for excretion by promoting cholesterol efflux from tissues and by acting as a cofactor for the lecithin cholesterol acyltransferase (LCAT). As part of the SPAP complex, activates spermatozoa motility. The protein is Apolipoprotein A-I (APOA1) of Cavia porcellus (Guinea pig).